We begin with the raw amino-acid sequence, 1848 residues long: Cellulose-binding protein A (1848 aa).

The first 28 residues, 1-28, serve as a signal peptide directing secretion; sequence MQKKKSLNLLLALMMVFALVLPSIPALA. A CBM3 domain is found at 29–190; sequence ATSSMSVEFY…GAKVLGTAPG (162 aa). Cohesin domains are found at residues 291-428, 435-570, 668-801, 810-943, 952-1085, 1094-1227, 1236-1369, 1377-1511, and 1709-1847; these read VTAT…TVTI, MQIS…SVTI, VTAT…SVTI, VKAT…RLTI, and FAVK…SVKV.

Post-translationally, the N-terminus is blocked. In terms of processing, glycosylated.

The protein resides in the secreted. Functionally, binds to cellulose fibers and coordinates cellulase enzymes. The polypeptide is Cellulose-binding protein A (cbpA) (Clostridium cellulovorans).